We begin with the raw amino-acid sequence, 1069 residues long: Protocadherin-7 (1069 aa).

The N-terminal stretch at 1 to 28 (MLRMRTAGWARGWCLGCCLLLPLSLSLA) is a signal peptide. 7 consecutive Cadherin domains span residues 29 to 143 (AAKQ…TPTF), 144 to 308 (PSPV…SPRF), 309 to 415 (EKSV…VPSI), 424 to 535 (PLKD…PPMF), 536 to 639 (GQSV…DPKF), 640 to 742 (MQDV…APTV), and 745 to 862 (PKNI…IPLT). Over 29–879 (AAKQLLRYRL…SYEISKQRLS (851 aa)) the chain is Extracellular. A glycan (N-linked (GlcNAc...) asparagine) is linked at N79. The interval 182–242 (LLQEPGGGGS…GGTNPGGRSS (61 aa)) is disordered. The segment covering 207–221 (PGGGGNGASGGGSGG) has biased composition (gly residues). N689, N747, N780, N822, N840, and N845 each carry an N-linked (GlcNAc...) asparagine glycan. A helical membrane pass occupies residues 880 to 900 (IVIGVVAGIMTVILIILIVVM). Over 901 to 1069 (ARYCRSKNKN…RLHPYITVFG (169 aa)) the chain is Cytoplasmic. The disordered stretch occupies residues 910–988 (NGYEAGKKDH…RYRSVNGGPG (79 aa)). Positions 930–944 (KSKKPKKDKKNKKSK) are enriched in basic residues. Phosphoserine occurs at positions 989 and 1011.

As to expression, expressed predominantly in brain and heart and at lower levels in various other tissues.

The protein resides in the cell membrane. In Homo sapiens (Human), this protein is Protocadherin-7 (PCDH7).